The following is a 489-amino-acid chain: MVAWNGTLVRPKLLIGASCQCVYNIYLHPLRHYPGPKLAAATGLYHWYWTLAGRIHRQLHKLHRQHGEVVRIGPDRLSFIAPEAWKDIYGPGTTSHKENKKDGRFYAPTPNGRRAMISLLDNQHHASVRRVFQPAFSDRSLRALEPVINKHVKRLMHTNLRQLARADEPFDLVHLLNCAIFDIMGDLMLSESFGMLEQSAYVEWIETLLVALRYESVGQFLLEYATLGKLLSFLMPPSARRKREQHVQYTAQRVDKRQQKSEATKRDIWGFLAAHENAEMLDIEDKHANASLFMVAGTETTITALSGLVFLLLQHPPCMRRLVAEIRDSFTCEDAINMDTLQGLSYLNACLSEALRLYPPVPLGNPRVTPADGNVICGHAVPGHTRVYVSTWAACRSASNFGDADSFMPERWLPDSGYDSDRKEASKPFSYGPRNCIGKSMAYHNIRIIIARILWNYDLLAAAESDGWMKQECFPLWDKKPLMVRVMLR.

The chain crosses the membrane as a helical span at residues 292-312 (LFMVAGTETTITALSGLVFLL). Cys436 is a binding site for heme.

This sequence belongs to the cytochrome P450 family. The cofactor is heme.

It is found in the membrane. The protein operates within mycotoxin biosynthesis. Its function is as follows. Cytochrome P450 monooxygenase; part of the gene clusters that mediate the biosynthesis of AM-toxins, host-selective toxins (HSTs) causing Alternaria blotch on apple, a worldwide distributed disease. AM-toxins are cyclic depsipeptides containing the 3 residues 2-hydroxy-isovaleric acid (2-HIV), dehydroalanine, L-alanine which are common for all 3 AM-toxins I to III. The fourth precursor is L-alpha-amino-methoxyphenyl-valeric acid (L-Amv) for AM-toxin I, L-alpha-amino-phenyl-valeric acid (L-Apv) for AM-toxin II, and L-alpha-amino-hydroxyphenyl-valeric acid (L-Ahv) for AM-toxin III. AM-toxins have two target sites for affecting susceptible apple cells; they cause invagination of the plasma membrane and electrolyte loss and chloroplast disorganization. The non-ribosomal peptide synthetase AMT1 contains 4 catalytic modules and is responsible for activation of each residue in AM-toxin. The aldo-keto reductase AMT2 catalyzes the conversion of 2-keto-isovaleric acid (2-KIV) to 2-hydroxy-isovaleric acid (2-HIV), one of the precursor residues incorporated by AMT1 during AM-toxin biosynthesis, by reduction of its ketone to an alcohol. The cytochrome P450 monooxygenase AMT3 and the thioesterase AMT4 are also important for AM-toxin production, but their exact function within the AM-toxin biosynthesis are not known yet. Up to 21 proteins (including AMT1 to AMT4) are predicted to be involved in AM-toxin biosynthesis since their expression ishighly up-regulated in AM-toxin-producing cultures. The chain is Cytochrome P450 monooxygenase AMT3 from Alternaria alternata (Alternaria rot fungus).